The sequence spans 531 residues: Isocitrate lyase (531 aa).

Residue 101–103 (SGW) participates in substrate binding. Asp-184 is a binding site for Mg(2+). The active-site Proton acceptor is Cys-222. Substrate contacts are provided by residues 223-224 (GH), 380-384 (NNSPS), and Thr-451.

Belongs to the isocitrate lyase/PEP mutase superfamily. Isocitrate lyase family. Homotetramer. Mg(2+) serves as cofactor.

The catalysed reaction is D-threo-isocitrate = glyoxylate + succinate. It functions in the pathway carbohydrate metabolism; glyoxylate cycle; (S)-malate from isocitrate: step 1/2. In terms of biological role, involved in the metabolic adaptation in response to environmental changes. Catalyzes the reversible formation of succinate and glyoxylate from isocitrate, a key step of the glyoxylate cycle, which operates as an anaplerotic route for replenishing the tricarboxylic acid cycle during growth on fatty acid substrates. This chain is Isocitrate lyase, found in Pseudomonas aeruginosa (strain ATCC 15692 / DSM 22644 / CIP 104116 / JCM 14847 / LMG 12228 / 1C / PRS 101 / PAO1).